The following is a 181-amino-acid chain: Ninjurin-B (181 aa).

Residues 1-10 (MDSGEVKISL) show a composition bias toward basic and acidic residues. Residues 1-72 (MDSGEVKISL…SNKKCSSDLS (72 aa)) are disordered. Residues 1–115 (MDSGEVKISL…YNDKASTYIY (115 aa)) are Extracellular-facing. Residues 12–26 (DSPSSGESFASTTSG) show a composition bias toward polar residues. Over residues 33 to 49 (RDLDIQVHESHIKDDQF) the composition is skewed to basic and acidic residues. Residues 80 to 91 (NKNVAEGLMDIA) form a helix alpha1 region. A helix alpha2 region spans residues 94-110 (SANANQLRFLITYNDKA). The chain crosses the membrane as a helical span at residues 116–136 (SMIMVILSLVLQLLVGIMLIF). Residues 137–153 (KRRLKRFRNRSYERTND) lie on the Cytoplasmic side of the membrane. Residues 154 to 174 (LLVMGVFMITVINILLAAFTT) traverse the membrane as a helical segment. The Extracellular segment spans residues 175–181 (TDGGGSH).

It belongs to the ninjurin family.

The protein resides in the membrane. Functionally, effector of non-apoptotic necrotic cell death that mediates plasma membrane rupture (cytolysis): oligomerizes in response to death stimuli and promotes plasma membrane rupture by introducing hydrophilic faces of 2 alpha helices into the hydrophobic membrane, leading to release intracellular molecules that propagate the inflammatory response. Also acts as a homophilic transmembrane adhesion molecule that promotes cell adhesion by mediating homophilic interactions via its extracellular region. The sequence is that of Ninjurin-B from Drosophila melanogaster (Fruit fly).